Consider the following 546-residue polypeptide: Probable protein kinase UbiB (546 aa).

The region spanning 124-502 (DFEIKPLASA…HVRQGQSRYF (379 aa)) is the Protein kinase domain. ATP contacts are provided by residues 130–138 (LASASIAQV) and Lys-153. Asp-288 acts as the Proton acceptor in catalysis. The next 2 helical transmembrane spans lie at 501-521 (YFLG…VSRP) and 522-542 (EWGL…FVGW).

This sequence belongs to the ABC1 family. UbiB subfamily.

The protein localises to the cell inner membrane. The protein operates within cofactor biosynthesis; ubiquinone biosynthesis [regulation]. In terms of biological role, is probably a protein kinase regulator of UbiI activity which is involved in aerobic coenzyme Q (ubiquinone) biosynthesis. The polypeptide is Probable protein kinase UbiB (Escherichia coli O127:H6 (strain E2348/69 / EPEC)).